The sequence spans 1782 residues: Vitellogenin receptor (1782 aa).

The signal sequence occupies residues 1–18 (MRFIVLLFICSFIYPCYV). Over 19-1663 (SSIGFRRISK…SINFSRNTRN (1645 aa)) the chain is Extracellular. LDL-receptor class A domains follow at residues 35–72 (KCEDGYFQCNSGECIPVDKKCDYIDHCIDGSDEDFECD), 81–118 (TCAKDQFKCKNQECIPAAKYCDMVNDCLDESDEHDGCV), and 122–157 (NCTNKFLCTDGHCINKEWVCDGRNDCPDGNDEWNCK). Cystine bridges form between cysteine 36/cysteine 48, cysteine 43/cysteine 61, cysteine 55/cysteine 71, cysteine 82/cysteine 94, cysteine 89/cysteine 107, and cysteine 101/cysteine 117. N-linked (GlcNAc...) asparagine glycosylation occurs at asparagine 122. Cystine bridges form between cysteine 123–cysteine 134, cysteine 129–cysteine 147, and cysteine 141–cysteine 156. The N-linked (GlcNAc...) asparagine glycan is linked to asparagine 159. The 40-residue stretch at 166-205 (SCKTENYQYMCANHRCISLKVVCDKKDDCGDGSDEGPGCT) folds into the LDL-receptor class A 4 domain. 3 cysteine pairs are disulfide-bonded: cysteine 167-cysteine 181, cysteine 176-cysteine 194, and cysteine 188-cysteine 204. Residues asparagine 208 and asparagine 239 are each glycosylated (N-linked (GlcNAc...) asparagine). The EGF-like 1 domain maps to 208–243 (NCSSAGCQSNCHQTPKGSVCTCKPGYKLQKDNRTCN). An EGF-like; calcium-binding domain is found at 244–283 (DIDECQAYGICDQDCMNVPGSYACTCQREYYLENDKRTCK). Cystine bridges form between cysteine 248-cysteine 258, cysteine 254-cysteine 267, and cysteine 269-cysteine 282. LDL-receptor class B repeat units follow at residues 327 to 374 (DYVY…DWIT), 375 to 416 (KNIY…LPTQ), 417 to 460 (GKMY…DYPN), 461 to 501 (ERLY…TVFQ), and 502 to 544 (NKLY…DHSA). Residues 552–588 (PCYSNPCSQLCMLNQNKGYTCGCTLDKKLNADKHTCQ) enclose the EGF-like 2 domain. Residues asparagine 702, asparagine 859, asparagine 896, and asparagine 923 are each glycosylated (N-linked (GlcNAc...) asparagine). One can recognise an EGF-like 3 domain in the interval 889-927 (DCQKNNGNCSHVCLPSLITSFICACPPGMELSNDNRTCI). LDL-receptor class A domains follow at residues 931-969 (ECSKNEYKCSEHNICIQRNQLCDGIENCPNGEDETSECR), 973-1009 (RCKENQFMCKNGDCIRLKDRCNSRYDCTDQSDEQNCE), 1012-1049 (KCKSDEFQCKFTETCIPKTKMCDSNPDCDDLSDEEDCR), 1052-1090 (ECTSNEFKCNNGKCIPNTFVCDNDNDCEDGEDEAAEKCY), and 1094-1131 (ACKMPKMFKCPNGDCISDSLLCNGINDCNDGSDEVHCL). Disulfide bonds link cysteine 932–cysteine 945, cysteine 939–cysteine 958, cysteine 952–cysteine 968, cysteine 974–cysteine 986, cysteine 981–cysteine 999, cysteine 993–cysteine 1008, cysteine 1013–cysteine 1026, cysteine 1020–cysteine 1039, cysteine 1033–cysteine 1048, cysteine 1053–cysteine 1065, cysteine 1060–cysteine 1078, cysteine 1072–cysteine 1089, cysteine 1095–cysteine 1108, cysteine 1103–cysteine 1121, and cysteine 1115–cysteine 1130. N-linked (GlcNAc...) asparagine glycans are attached at residues asparagine 1133 and asparagine 1140. 3 consecutive LDL-receptor class A domains span residues 1140-1177 (NCSLNEYRCLGTDICLPKNVRCDGKNDCPQSDDEQNCT), 1178-1214 (YCFENEFACDNKRCIPELWVCDKANDCGDNSDEKNCD), and 1225-1260 (ECDEFKCSVGTCLPYSKVCDGNRDCPDGSDETGKCQ). Cystine bridges form between cysteine 1141–cysteine 1154, cysteine 1148–cysteine 1167, cysteine 1161–cysteine 1176, cysteine 1179–cysteine 1191, cysteine 1186–cysteine 1204, cysteine 1198–cysteine 1213, cysteine 1226–cysteine 1236, cysteine 1231–cysteine 1249, and cysteine 1243–cysteine 1259. N-linked (GlcNAc...) asparagine glycosylation is present at asparagine 1175. One can recognise an EGF-like 4 domain in the interval 1262–1298 (ACTVNNFCKGMCYKTPAGAVCGCQSGYRLAVDMISCE). 3 LDL-receptor class B repeats span residues 1385-1425 (DSVY…DWIT), 1471-1518 (RWLF…DHVK), and 1519-1561 (SKLY…FEQS). N-linked (GlcNAc...) asparagine glycans are attached at residues asparagine 1626, asparagine 1640, and asparagine 1656. A helical membrane pass occupies residues 1664–1684 (ISGIYSITIIVLLVSVLLLCV). Topologically, residues 1685-1782 (YYYYQKNKLK…ALIYFVHNSK (98 aa)) are cytoplasmic.

In terms of tissue distribution, expressed in ovaries of reproductive females.

Its subcellular location is the membrane. Functionally, involved in uptake of vitellogenin by endocytosis. Expression is regulated by the juvenile hormone analog, methoprene (in vitro). This chain is Vitellogenin receptor, found in Solenopsis invicta (Red imported fire ant).